A 538-amino-acid polypeptide reads, in one-letter code: Putative cysteine ligase BshC (538 aa).

Residues 460-484 (KINEQIELLERMLKRNVEKKHEVEL) adopt a coiled-coil conformation.

Belongs to the BshC family.

Its function is as follows. Involved in bacillithiol (BSH) biosynthesis. May catalyze the last step of the pathway, the addition of cysteine to glucosamine malate (GlcN-Mal) to generate BSH. In Bacillus thuringiensis (strain Al Hakam), this protein is Putative cysteine ligase BshC.